A 428-amino-acid chain; its full sequence is MVHRTEPPDGGWGWMVVLSAFFQSALVFGVLRSFGVFFVEFVAAFEEQAARVSWIASIGIAVQQFGSPIGSALSTKLGPRPVVMTGGILAALGMLLASFATSLTHLYLSIGLLSGSGWALTFTPTLACLSRYFSQRRSLAMGLALTGVGISSFAFAPLFQWLLNNYAWRGALLLVSALSLHLVACGALLRPLSLTEDTAVGGPWAQITSLLCHGPFLRYTVALTLINTGYFIPYVHLVAHLQDLGWDPLPAAFLLSVAAISDLVGRVASGWLGDAVPGPVARLLMLWTTLTGVSLALFPVAQASTTLVVLAVAYGFTSGALTPVAFSVIPELVGTGRIYCGLGLVQMIESVGGLLGAPLSGYLRDVTGNYTASFVVAGAFLLAGSGVLITLPHFFSCISLSTSRPQDLVIEAPDTKIPLPKEEGLGEN.

Over 1–10 (MVHRTEPPDG) the chain is Cytoplasmic. 12 helical membrane-spanning segments follow: residues 11–31 (GWGW…FGVL), 52–72 (VSWI…IGSA), 81–101 (PVVM…SFAT), 106–126 (LYLS…TPTL), 139–159 (LAMG…APLF), 172–192 (LLLV…LRPL), 221–241 (VALT…VAHL), 244–264 (LGWD…SDLV), 283–303 (LLML…VAQA), 309–329 (VLAV…FSVI), 338–358 (IYCG…LGAP), and 374–394 (FVVA…LPHF). Residues 395–428 (FSCISLSTSRPQDLVIEAPDTKIPLPKEEGLGEN) are Cytoplasmic-facing.

Belongs to the major facilitator superfamily. Monocarboxylate porter (TC 2.A.1.13) family.

The protein resides in the golgi apparatus membrane. Its subcellular location is the cell membrane. Functionally, proton-linked monocarboxylate transporter. May catalyze the transport of monocarboxylates across the plasma membrane. This chain is Monocarboxylate transporter 13 (Slc16a13), found in Rattus norvegicus (Rat).